We begin with the raw amino-acid sequence, 713 residues long: Probable arginine--tRNA ligase, cytoplasmic (713 aa).

The disordered stretch occupies residues 74 to 113 (KNKKNGVKATSTSSPSSSTSAPAEKKAKKDGKTGGAPPKQ). Positions 81–95 (KATSTSSPSSSTSAP) are enriched in low complexity. A compositionally biased stretch (basic and acidic residues) spans 96-105 (AEKKAKKDGK). Residues 252–254 (SPN), histidine 263, tyrosine 438, aspartate 442, and glutamine 466 contribute to the L-arginine site. Residues 252 to 263 (SPNIAKEMHVGH) carry the 'HIGH' region motif. Residues 583 to 597 (NTAVYLLYAYTRIQS) are interaction with tRNA.

This sequence belongs to the class-I aminoacyl-tRNA synthetase family.

Its subcellular location is the cytoplasm. The protein localises to the cytosol. The catalysed reaction is tRNA(Arg) + L-arginine + ATP = L-arginyl-tRNA(Arg) + AMP + diphosphate. Functionally, forms part of a macromolecular complex that catalyzes the attachment of specific amino acids to cognate tRNAs during protein synthesis. The protein is Probable arginine--tRNA ligase, cytoplasmic of Caenorhabditis elegans.